The primary structure comprises 245 residues: 5-oxoprolinase subunit A (245 aa).

It belongs to the LamB/PxpA family. Forms a complex composed of PxpA, PxpB and PxpC.

The enzyme catalyses 5-oxo-L-proline + ATP + 2 H2O = L-glutamate + ADP + phosphate + H(+). Catalyzes the cleavage of 5-oxoproline to form L-glutamate coupled to the hydrolysis of ATP to ADP and inorganic phosphate. This chain is 5-oxoprolinase subunit A, found in Neisseria meningitidis serogroup A / serotype 4A (strain DSM 15465 / Z2491).